Reading from the N-terminus, the 363-residue chain is Adenylate cyclase 2 (363 aa).

The region spanning 157–286 is the Guanylate cyclase domain; the sequence is VFLFIDLAGS…DTVNTTARLE (130 aa). Mg(2+) is bound by residues aspartate 162 and aspartate 206. Residues 341 to 363 are disordered; it reads GDGATEPAGETVRSPAAEAFTSL.

This sequence belongs to the adenylyl cyclase class-3 family. Requires Mg(2+) as cofactor.

The catalysed reaction is ATP = 3',5'-cyclic AMP + diphosphate. Its function is as follows. Plays essential roles in regulation of cellular metabolism by catalyzing the synthesis of a second messenger, cAMP. This Rhizobium meliloti (strain 1021) (Ensifer meliloti) protein is Adenylate cyclase 2 (cya2).